The following is a 629-amino-acid chain: Nicotinic receptor-associated protein 1 (629 aa).

2 consecutive C2 domains span residues Met1–Leu144 and Arg162–Leu299. Ca(2+) contacts are provided by Asp33, Asp39, Asp108, Asp110, Asp122, Asp192, Asp198, Asp254, Asp256, and Asp274. The region spanning Glu342–Leu561 is the VWFA domain. Disordered regions lie at residues Gly581 to Tyr600 and Ile607 to Tyr629.

The protein belongs to the copine family. As to quaternary structure, interacts with nicotinic acetylcholine receptor. Ca(2+) is required as a cofactor.

It is found in the cell membrane. In terms of biological role, exhibits calcium-dependent phospholipid binding properties. May function in membrane trafficking. Regulates synaptic levels of nicotinic acetylcholine receptor subunit lev-1 and unc-38 in the nerve cord. Involved in nicotinic acetylcholine receptor (nAChR)-mediated sensitivity to nicotine and levamisole. Affects directional sperm motility. In Caenorhabditis briggsae, this protein is Nicotinic receptor-associated protein 1.